Reading from the N-terminus, the 557-residue chain is Glutathione hydrolase proenzyme (557 aa).

The signal sequence occupies residues methionine 1–alanine 24. Residue arginine 94 participates in L-glutamate binding. Threonine 364 functions as the Nucleophile in the catalytic mechanism. L-glutamate contacts are provided by residues threonine 382, asparagine 384, glutamate 403, aspartate 406, serine 435–serine 436, and glycine 456–glycine 457.

Belongs to the gamma-glutamyltransferase family. This enzyme consists of two polypeptide chains, which are synthesized in precursor form from a single polypeptide. In terms of processing, cleaved by autocatalysis into a large and a small subunit.

It is found in the periplasm. The catalysed reaction is an N-terminal (5-L-glutamyl)-[peptide] + an alpha-amino acid = 5-L-glutamyl amino acid + an N-terminal L-alpha-aminoacyl-[peptide]. It carries out the reaction glutathione + H2O = L-cysteinylglycine + L-glutamate. The enzyme catalyses an S-substituted glutathione + H2O = an S-substituted L-cysteinylglycine + L-glutamate. It functions in the pathway sulfur metabolism; glutathione metabolism. The chain is Glutathione hydrolase proenzyme (ggt) from Pseudomonas aeruginosa (strain ATCC 15692 / DSM 22644 / CIP 104116 / JCM 14847 / LMG 12228 / 1C / PRS 101 / PAO1).